Consider the following 152-residue polypeptide: Aspartate carbamoyltransferase regulatory chain (152 aa).

Zn(2+)-binding residues include cysteine 108, cysteine 113, cysteine 137, and cysteine 140.

This sequence belongs to the PyrI family. In terms of assembly, contains catalytic and regulatory chains. The cofactor is Zn(2+).

Involved in allosteric regulation of aspartate carbamoyltransferase. This Neisseria meningitidis serogroup B (strain ATCC BAA-335 / MC58) protein is Aspartate carbamoyltransferase regulatory chain.